The following is a 559-amino-acid chain: Tissue-type plasminogen activator (559 aa).

An N-terminal signal peptide occupies residues 1 to 17; sequence MKRELLCVLLLCGLAFP. A propeptide spanning residues 18–29 is cleaved from the precursor; sequence LPDQGIHGRFRR. Residues 30 to 32 constitute a propeptide, removed by plasmin; the sequence is GAR. One can recognise a Fibronectin type-I domain in the interval 36-78; sequence ATCRDEPTQTTYQQHQSWLRPMLRSSRVEYCRCNSGLVQCHSV. 17 disulfides stabilise this stretch: Cys-38-Cys-68, Cys-66-Cys-75, Cys-83-Cys-94, Cys-88-Cys-105, Cys-107-Cys-116, Cys-124-Cys-205, Cys-145-Cys-187, Cys-176-Cys-200, Cys-213-Cys-294, Cys-234-Cys-276, Cys-265-Cys-289, Cys-297-Cys-428, Cys-340-Cys-356, Cys-348-Cys-417, Cys-442-Cys-516, Cys-474-Cys-490, and Cys-506-Cys-534. The interval 39–49 is important for binding to annexin A2; the sequence is RDEPTQTTYQQ. Residues 79-117 form the EGF-like domain; that stretch reads PVRSCSEPRCFNGGTCQQALYFSDFVCQCPDGFVGKRCD. Kringle domains are found at residues 124 to 205 and 213 to 294; these read CFEE…TPAC and CYVG…MSPC. N-linked (GlcNAc...) asparagine glycosylation is present at Asn-149. The Peptidase S1 domain maps to 309–558; it reads IKGGLYTDIT…YLDWIHDNMK (250 aa). Catalysis depends on charge relay system residues His-355 and Asp-404. Asn-481 carries an N-linked (GlcNAc...) asparagine glycan. Ser-510 acts as the Charge relay system in catalysis.

It belongs to the peptidase S1 family. Heterodimer of chain A and chain B held by a disulfide bond. Binds to fibrin with high affinity. This interaction leads to an increase in the catalytic efficiency of the enzyme due to an increase in affinity for plasminogen. Similarly, binding to heparin increases the activation of plasminogen. Binds to annexin A2, cytokeratin-8, fibronectin and laminin. Binds to mannose receptor and the low-density lipoprotein receptor-related protein (LRP1); these proteins are involved in TPA clearance. Binds LRP1B; binding is followed by internalization and degradation. Forms heterodimer with SERPINA5. Interacts with SERPINE1. In complex with SERPINE1, interacts with SORL1. Post-translationally, the single chain, almost fully active enzyme, can be further processed into a two-chain fully active form by a cleavage after Arg-308 catalyzed by plasmin, tissue kallikrein or factor Xa.

It localises to the secreted. The protein resides in the extracellular space. It catalyses the reaction Specific cleavage of Arg-|-Val bond in plasminogen to form plasmin.. With respect to regulation, inhibited by SERPINA5. Inhibited by SERPINE1. Functionally, converts the abundant, but inactive, zymogen plasminogen to plasmin by hydrolyzing a single Arg-Val bond in plasminogen. By controlling plasmin-mediated proteolysis, it plays an important role in tissue remodeling and degradation, in cell migration and many other physiopathological events. During oocyte activation, plays a role in cortical granule reaction in the zona reaction, which contributes to the block to polyspermy. This chain is Tissue-type plasminogen activator (Plat), found in Mus musculus (Mouse).